The following is a 169-amino-acid chain: Peptide deformylase (169 aa).

The Fe cation site is built by Cys-91 and His-133. Glu-134 is an active-site residue. Residue His-137 coordinates Fe cation.

Belongs to the polypeptide deformylase family. It depends on Fe(2+) as a cofactor.

It catalyses the reaction N-terminal N-formyl-L-methionyl-[peptide] + H2O = N-terminal L-methionyl-[peptide] + formate. Functionally, removes the formyl group from the N-terminal Met of newly synthesized proteins. Requires at least a dipeptide for an efficient rate of reaction. N-terminal L-methionine is a prerequisite for activity but the enzyme has broad specificity at other positions. This is Peptide deformylase from Klebsiella pneumoniae subsp. pneumoniae (strain ATCC 700721 / MGH 78578).